The chain runs to 469 residues: RuvB-like helicase 2 (469 aa).

73-80 lines the ATP pocket; it reads GEPGTGKT.

Belongs to the RuvB family. As to quaternary structure, forms homohexameric rings. May form a dodecamer with rvb1 made of two stacked hexameric rings. Component of the chromatin remodeling Ino80 complex. Component of the RNA polymerase II holoenzyme complex.

It is found in the nucleus. It catalyses the reaction ATP + H2O = ADP + phosphate + H(+). Its function is as follows. Has double-stranded DNA-stimulated ATPase and ATP-dependent DNA helicase (5' to 3') activity suggesting a role in nuclear processes such as recombination and transcription. Functionally, proposed core component of the chromatin remodeling Ino80 complex which is involved in transcriptional regulation, DNA replication and probably DNA repair. This chain is RuvB-like helicase 2 (rvb2), found in Dictyostelium discoideum (Social amoeba).